A 608-amino-acid polypeptide reads, in one-letter code: Alpha-1,3-galactosidase A (608 aa).

Residues 1–21 (MQRRTFIKSISAMMATSTTLG) form the signal peptide. A lipid anchor (N-palmitoyl cysteine) is attached at C22. C22 carries S-diacylglycerol cysteine lipidation. 5 PbH1 repeats span residues 262 to 292 (TKNTWLENIDIHHSGAMGVIAQLADGIKLDN), 318 to 340 (KGHVVLKDCLFQGQIDDGTNVHG), 426 to 448 (PDHVMISGCRFTGNRARGALLTV), 449 to 470 (SGKIIVENNYFSTPMMAIKIGS), and 481 to 507 (VESVEIRNNIFDNCNYAKDSSAIDIVP).

This sequence belongs to the glycosyl hydrolase 110 family. A subfamily.

The protein resides in the cell membrane. The catalysed reaction is Hydrolysis of terminal, non-reducing branched (1-&gt;3)-alpha-D-galactosidic residues, producing free D-galactose.. It catalyses the reaction Hydrolysis of terminal, non-reducing alpha-D-galactose residues in alpha-D-galactosides, including galactose oligosaccharides, galactomannans and galactolipids.. Alpha-galactosidase that specifically removes branched alpha-1,3-linked galactose residues present in blood group B antigens. Has no activity toward linear alpha-1,3-linked galactose residues. This is Alpha-1,3-galactosidase A (glaA) from Shewanella woodyi (strain ATCC 51908 / MS32).